The primary structure comprises 695 residues: Tail-specific protease (695 aa).

A signal peptide spans 1–29 (MVMKFKMSKNVICYTWLSVCLSSAIPAFA). The PDZ domain maps to 256–316 (IGTTLQSEDD…RLEDLVEKIK (61 aa)). Catalysis depends on charge relay system residues Ser459, Asp470, and Lys484.

The protein belongs to the peptidase S41A family.

The protein resides in the cell inner membrane. The enzyme catalyses The enzyme shows specific recognition of a C-terminal tripeptide, Xaa-Yaa-Zaa, in which Xaa is preferably Ala or Leu, Yaa is preferably Ala or Tyr, and Zaa is preferably Ala, but then cleaves at a variable distance from the C-terminus. A typical cleavage is -Ala-Ala-|-Arg-Ala-Ala-Lys-Glu-Asn-Tyr-Ala-Leu-Ala-Ala.. Its function is as follows. Involved in the cleavage of a C-terminal peptide of 11 residues from the precursor form of penicillin-binding protein 3 (PBP3). May be involved in protection of the bacterium from thermal and osmotic stresses. This Haemophilus influenzae (strain ATCC 51907 / DSM 11121 / KW20 / Rd) protein is Tail-specific protease (prc).